We begin with the raw amino-acid sequence, 399 residues long: L-2-hydroxyglutarate dehydrogenase (399 aa).

The protein belongs to the L2HGDH family. It depends on FAD as a cofactor.

The enzyme catalyses (S)-2-hydroxyglutarate + A = 2-oxoglutarate + AH2. Functionally, catalyzes the dehydrogenation of L-2-hydroxyglutarate (L2HG or(S)-2-hydroxyglutarate) to 2-oxoglutarate (alpha-ketoglutarate). Active in vitro with the artificial electron acceptor 2,6-dichlorophenolindophenol (DCPIP). Also displays a very low oxidase activity in vitro on L-2-hydroxyglutarate with O2 as the electron acceptor, but this activity is most likely not physiological. This chain is L-2-hydroxyglutarate dehydrogenase, found in Indibacter alkaliphilus (strain CCUG 57479 / KCTC 22604 / LW1).